The sequence spans 127 residues: Small ribosomal subunit protein uS11 (127 aa).

This sequence belongs to the universal ribosomal protein uS11 family. Part of the 30S ribosomal subunit. Interacts with proteins S7 and S18. Binds to IF-3.

In terms of biological role, located on the platform of the 30S subunit, it bridges several disparate RNA helices of the 16S rRNA. Forms part of the Shine-Dalgarno cleft in the 70S ribosome. In Lactococcus lactis subsp. lactis (strain IL1403) (Streptococcus lactis), this protein is Small ribosomal subunit protein uS11.